The chain runs to 388 residues: Coproporphyrin III ferrochelatase (388 aa).

Fe-coproporphyrin III-binding residues include serine 59 and tyrosine 124. 2 residues coordinate Fe(2+): histidine 186 and glutamate 276. Residues 349–369 (QSPQHASRAVTDAAATGRRGD) are disordered.

The protein belongs to the ferrochelatase family.

Its subcellular location is the cytoplasm. It catalyses the reaction Fe-coproporphyrin III + 2 H(+) = coproporphyrin III + Fe(2+). Its pathway is porphyrin-containing compound metabolism; protoheme biosynthesis. Functionally, involved in coproporphyrin-dependent heme b biosynthesis. Catalyzes the insertion of ferrous iron into coproporphyrin III to form Fe-coproporphyrin III. The polypeptide is Coproporphyrin III ferrochelatase (Frankia alni (strain DSM 45986 / CECT 9034 / ACN14a)).